The chain runs to 240 residues: Protein FATTY ACID EXPORT 2, chloroplastic (240 aa).

The transit peptide at 1–84 directs the protein to the chloroplast; the sequence is MADLILSSSS…TANCVDSGVK (84 aa). Over residues 97–113 the composition is skewed to gly residues; that stretch reads GGGIGGDKFGGGGGGGD. The disordered stretch occupies residues 97–134; that stretch reads GGGIGGDKFGGGGGGGDGNDDGGEDDKEESDGKKSTPL. The span at 114 to 125 shows a compositional bias: acidic residues; it reads GNDDGGEDDKEE. The next 3 helical transmembrane spans lie at 164-184, 186-206, and 214-234; these read SLLA…QLPT, PVLA…VMGT, and IFPA…YIHG.

It belongs to the TMEM14 family.

It localises to the plastid. The protein resides in the chloroplast membrane. May be involved in free fatty acids export from the plastids. This chain is Protein FATTY ACID EXPORT 2, chloroplastic, found in Arabidopsis thaliana (Mouse-ear cress).